The primary structure comprises 201 residues: Peptide deformylase (201 aa).

2 residues coordinate Fe cation: Cys-92 and His-134. Residue Glu-135 is part of the active site. Residue His-138 participates in Fe cation binding.

This sequence belongs to the polypeptide deformylase family. Requires Fe(2+) as cofactor.

The enzyme catalyses N-terminal N-formyl-L-methionyl-[peptide] + H2O = N-terminal L-methionyl-[peptide] + formate. Removes the formyl group from the N-terminal Met of newly synthesized proteins. Requires at least a dipeptide for an efficient rate of reaction. N-terminal L-methionine is a prerequisite for activity but the enzyme has broad specificity at other positions. The protein is Peptide deformylase of Rhodopirellula baltica (strain DSM 10527 / NCIMB 13988 / SH1).